Consider the following 185-residue polypeptide: MIKFNIRGENVEVTDAIRAYVEDKIGKLDKYFNDGHEVTAYVNLKVYTEKRAKVEVTLPAKNVTLRAEDTSQDMYSSIDFVEEKLERQIRKYKTRMNRKPRNAVPTGQVFGDEFAPLDTTDEVAEDHVDIVRTKHVALKPMDAEEAVLQMDMLGHDFYVFTDADSNGTHVVYRRTDGRYGLIETE.

Residues 1–125 (MIKFNIRGEN…PLDTTDEVAE (125 aa)) form a probably still associates with ribosome region. The required but not sufficient to restore ribosome dimerization, in vitro will replace E.coli RMF in ribosome dimerization stretch occupies residues 126-185 (DHVDIVRTKHVALKPMDAEEAVLQMDMLGHDFYVFTDADSNGTHVVYRRTDGRYGLIETE).

It belongs to the HPF/YfiA ribosome-associated protein family. Long HPF subfamily. As to quaternary structure, interacts with 100S ribosomes in stationary phase; alters the relative position of the 30S and 50S subunits.

The protein localises to the cytoplasm. Required for dimerization of active 70S ribosomes into 100S ribosomes in stationary phase; 100S ribosomes are translationally inactive and sometimes present during exponential growth. Able to dimerize E.coli 70S ribosomes in vitro. This chain is Ribosome hibernation promotion factor, found in Lactococcus lactis subsp. cremoris (strain MG1363).